We begin with the raw amino-acid sequence, 562 residues long: Arginine--tRNA ligase (562 aa).

Residues 129-139 (ANPTGPLHVGH) carry the 'HIGH' region motif.

This sequence belongs to the class-I aminoacyl-tRNA synthetase family. As to quaternary structure, monomer.

The protein resides in the cytoplasm. The catalysed reaction is tRNA(Arg) + L-arginine + ATP = L-arginyl-tRNA(Arg) + AMP + diphosphate. The polypeptide is Arginine--tRNA ligase (Xylella fastidiosa (strain M23)).